Here is a 96-residue protein sequence, read N- to C-terminus: Large ribosomal subunit protein uL23 (96 aa).

It belongs to the universal ribosomal protein uL23 family. As to quaternary structure, part of the 50S ribosomal subunit. Contacts protein L29, and trigger factor when it is bound to the ribosome.

Its function is as follows. One of the early assembly proteins it binds 23S rRNA. One of the proteins that surrounds the polypeptide exit tunnel on the outside of the ribosome. Forms the main docking site for trigger factor binding to the ribosome. In Endomicrobium trichonymphae, this protein is Large ribosomal subunit protein uL23.